Reading from the N-terminus, the 89-residue chain is Small ribosomal subunit protein uS17 (89 aa).

This sequence belongs to the universal ribosomal protein uS17 family. As to quaternary structure, part of the 30S ribosomal subunit.

In terms of biological role, one of the primary rRNA binding proteins, it binds specifically to the 5'-end of 16S ribosomal RNA. The chain is Small ribosomal subunit protein uS17 from Paracidovorax citrulli (strain AAC00-1) (Acidovorax citrulli).